Reading from the N-terminus, the 218-residue chain is N-(5'-phosphoribosyl)anthranilate isomerase (218 aa).

It belongs to the TrpF family.

The enzyme catalyses N-(5-phospho-beta-D-ribosyl)anthranilate = 1-(2-carboxyphenylamino)-1-deoxy-D-ribulose 5-phosphate. It participates in amino-acid biosynthesis; L-tryptophan biosynthesis; L-tryptophan from chorismate: step 3/5. This Bordetella pertussis (strain Tohama I / ATCC BAA-589 / NCTC 13251) protein is N-(5'-phosphoribosyl)anthranilate isomerase.